We begin with the raw amino-acid sequence, 275 residues long: 2-dehydro-3-deoxyphosphooctonate aldolase (275 aa).

This sequence belongs to the KdsA family.

Its subcellular location is the cytoplasm. The catalysed reaction is D-arabinose 5-phosphate + phosphoenolpyruvate + H2O = 3-deoxy-alpha-D-manno-2-octulosonate-8-phosphate + phosphate. Its pathway is carbohydrate biosynthesis; 3-deoxy-D-manno-octulosonate biosynthesis; 3-deoxy-D-manno-octulosonate from D-ribulose 5-phosphate: step 2/3. The protein operates within bacterial outer membrane biogenesis; lipopolysaccharide biosynthesis. This chain is 2-dehydro-3-deoxyphosphooctonate aldolase, found in Francisella tularensis subsp. novicida (strain U112).